Here is a 146-residue protein sequence, read N- to C-terminus: 3-hydroxyacyl-[acyl-carrier-protein] dehydratase FabZ (146 aa).

H47 is a catalytic residue.

The protein belongs to the thioester dehydratase family. FabZ subfamily.

The protein localises to the cytoplasm. The enzyme catalyses a (3R)-hydroxyacyl-[ACP] = a (2E)-enoyl-[ACP] + H2O. In terms of biological role, involved in unsaturated fatty acids biosynthesis. Catalyzes the dehydration of short chain beta-hydroxyacyl-ACPs and long chain saturated and unsaturated beta-hydroxyacyl-ACPs. In Nitrosospira multiformis (strain ATCC 25196 / NCIMB 11849 / C 71), this protein is 3-hydroxyacyl-[acyl-carrier-protein] dehydratase FabZ.